Reading from the N-terminus, the 223-residue chain is Ribonuclease 3 (223 aa).

In terms of domain architecture, RNase III spans tyrosine 4 to glycine 127. Glutamate 40 is a Mg(2+) binding site. Aspartate 44 is an active-site residue. Mg(2+)-binding residues include asparagine 113 and glutamate 116. The active site involves glutamate 116. Residues aspartate 154–lysine 223 enclose the DRBM domain.

It belongs to the ribonuclease III family. As to quaternary structure, homodimer. Requires Mg(2+) as cofactor.

It is found in the cytoplasm. The enzyme catalyses Endonucleolytic cleavage to 5'-phosphomonoester.. In terms of biological role, digests double-stranded RNA. Involved in the processing of primary rRNA transcript to yield the immediate precursors to the large and small rRNAs (23S and 16S). Processes some mRNAs, and tRNAs when they are encoded in the rRNA operon. Processes pre-crRNA and tracrRNA of type II CRISPR loci if present in the organism. This is Ribonuclease 3 from Sulfurovum sp. (strain NBC37-1).